The chain runs to 446 residues: Tubulin beta-5 chain (446 aa).

An MREI motif motif is present at residues M1–I4. Positions 11, 69, 138, 142, 143, 144, 204, and 226 each coordinate GTP. A Mg(2+)-binding site is contributed by E69. Residue E438 is modified to 5-glutamyl polyglutamate.

Belongs to the tubulin family. As to quaternary structure, dimer of alpha and beta chains. A typical microtubule is a hollow water-filled tube with an outer diameter of 25 nm and an inner diameter of 15 nM. Alpha-beta heterodimers associate head-to-tail to form protofilaments running lengthwise along the microtubule wall with the beta-tubulin subunit facing the microtubule plus end conferring a structural polarity. Microtubules usually have 13 protofilaments but different protofilament numbers can be found in some organisms and specialized cells. Mg(2+) serves as cofactor. In terms of processing, some glutamate residues at the C-terminus are polyglycylated, resulting in polyglycine chains on the gamma-carboxyl group. Glycylation is mainly limited to tubulin incorporated into axonemes (cilia and flagella) whereas glutamylation is prevalent in neuronal cells, centrioles, axonemes, and the mitotic spindle. Both modifications can coexist on the same protein on adjacent residues, and lowering polyglycylation levels increases polyglutamylation, and reciprocally. The precise function of polyglycylation is still unclear. Some glutamate residues at the C-terminus are polyglutamylated, resulting in polyglutamate chains on the gamma-carboxyl group. Polyglutamylation plays a key role in microtubule severing by spastin (SPAST). SPAST preferentially recognizes and acts on microtubules decorated with short polyglutamate tails: severing activity by SPAST increases as the number of glutamates per tubulin rises from one to eight, but decreases beyond this glutamylation threshold.

The protein localises to the cytoplasm. It is found in the cytoskeleton. In terms of biological role, tubulin is the major constituent of microtubules, a cylinder consisting of laterally associated linear protofilaments composed of alpha- and beta-tubulin heterodimers. Microtubules grow by the addition of GTP-tubulin dimers to the microtubule end, where a stabilizing cap forms. Below the cap, tubulin dimers are in GDP-bound state, owing to GTPase activity of alpha-tubulin. The sequence is that of Tubulin beta-5 chain from Gallus gallus (Chicken).